The primary structure comprises 459 residues: Phosphoglucosamine mutase (459 aa).

Serine 102 serves as the catalytic Phosphoserine intermediate. Mg(2+)-binding residues include serine 102, aspartate 243, aspartate 245, and aspartate 247. Serine 102 is modified (phosphoserine).

The protein belongs to the phosphohexose mutase family. Mg(2+) is required as a cofactor. Activated by phosphorylation.

The enzyme catalyses alpha-D-glucosamine 1-phosphate = D-glucosamine 6-phosphate. Functionally, catalyzes the conversion of glucosamine-6-phosphate to glucosamine-1-phosphate. The polypeptide is Phosphoglucosamine mutase (Bartonella henselae (strain ATCC 49882 / DSM 28221 / CCUG 30454 / Houston 1) (Rochalimaea henselae)).